The following is a 111-amino-acid chain: Ribonuclease P protein component (111 aa).

Belongs to the RnpA family. Consists of a catalytic RNA component (M1 or rnpB) and a protein subunit.

It carries out the reaction Endonucleolytic cleavage of RNA, removing 5'-extranucleotides from tRNA precursor.. In terms of biological role, RNaseP catalyzes the removal of the 5'-leader sequence from pre-tRNA to produce the mature 5'-terminus. It can also cleave other RNA substrates such as 4.5S RNA. The protein component plays an auxiliary but essential role in vivo by binding to the 5'-leader sequence and broadening the substrate specificity of the ribozyme. In Fusobacterium nucleatum subsp. nucleatum (strain ATCC 25586 / DSM 15643 / BCRC 10681 / CIP 101130 / JCM 8532 / KCTC 2640 / LMG 13131 / VPI 4355), this protein is Ribonuclease P protein component.